Reading from the N-terminus, the 167-residue chain is Ubiquitin-fold modifier-conjugating enzyme 1 (167 aa).

Cys116 functions as the Glycyl thioester intermediate in the catalytic mechanism.

Belongs to the ubiquitin-conjugating enzyme family. UFC1 subfamily.

Functionally, E2-like enzyme which forms an intermediate with UFM1 via a thioester linkage. The chain is Ubiquitin-fold modifier-conjugating enzyme 1 from Anopheles gambiae (African malaria mosquito).